The primary structure comprises 305 residues: Probable G-protein coupled receptor 141 (305 aa).

Over 1–22 (MPGHNTSRNSSCDPIVTPHLIS) the chain is Extracellular. Residues N5 and N9 are each glycosylated (N-linked (GlcNAc...) asparagine). Residues 23-43 (LYFIVLIGGLVGVISILFLLV) traverse the membrane as a helical segment. Residues 44 to 50 (KMNTRSV) are Cytoplasmic-facing. The helical transmembrane segment at 51–71 (TTMAVINLVVVHSVFLLTVPF) threads the bilayer. The Extracellular portion of the chain corresponds to 72-89 (RLTYLIKKTWMFGLPFCK). The chain crosses the membrane as a helical span at residues 90 to 110 (FVSAMLHIHMYLTFLFYVVIL). The Cytoplasmic segment spans residues 111 to 131 (VTRYLIFFKCKDKVEFYRKLH). The helical transmembrane segment at 132 to 152 (AVAASAGMWTLVIVIVVPLVV) threads the bilayer. Topologically, residues 153–183 (SRYGIHEEYNEEHCFKFHKELAYTYVKIINY) are extracellular. The helical transmembrane segment at 184–204 (MIVIFVIAVAVILLVFQVFII) threads the bilayer. Residues 205 to 227 (MLMVQKLRHSLLSHQEFWAQLKN) lie on the Cytoplasmic side of the membrane. Residues 228-248 (LFFIGVILVCFLPYQFFRIYY) form a helical membrane-spanning segment. Over 249–267 (LNVVTHSNACNSKVAFYNE) the chain is Extracellular. The helical transmembrane segment at 268–288 (IFLSVTAISCYDLLLFVFGGS) threads the bilayer. At 289–305 (HWFKQKIIGLWNCVLCR) the chain is on the cytoplasmic side.

Belongs to the G-protein coupled receptor 1 family.

It is found in the cell membrane. Its function is as follows. Orphan receptor. This is Probable G-protein coupled receptor 141 (GPR141) from Homo sapiens (Human).